We begin with the raw amino-acid sequence, 1203 residues long: Probable phospholipid-transporting ATPase 11 (1203 aa).

The Cytoplasmic portion of the chain corresponds to 1–71 (MTKCRRRRLH…STKYTLASFI (71 aa)). Residues 72 to 93 (PKSLFEQFRRVANFYFLVTGVL) form a helical membrane-spanning segment. Residues 94-97 (SLTA) lie on the Extracellular side of the membrane. Residues 98 to 120 (LSPYSPISALLPLTFVIAASMVK) form a helical membrane-spanning segment. At 121 to 303 (EAIEDWGRKK…SRIERKMDKI (183 aa)) the chain is on the cytoplasmic side. The chain crosses the membrane as a helical span at residues 304-325 (IYLMFGVVFLMSFIGSIVFGIE). Residues 326–363 (TREDRVRNGGRTERWYLRPDNADIFFDPDRAPMAAVYH) are Extracellular-facing. A helical membrane pass occupies residues 364 to 381 (FFTAVMLYSYFIPISLYV). Residues 382 to 921 (SIEIVKVLQS…HGHWCYSRIS (540 aa)) are Cytoplasmic-facing. The 4-aspartylphosphate intermediate role is filled by Asp-429. 2 residues coordinate Mg(2+): Asp-866 and Asp-870. Residues 922 to 941 (SMICYFFYKNITFGVTVFLY) form a helical membrane-spanning segment. Over 942–955 (EAYTSFSAQPAYND) the chain is Extracellular. A helical membrane pass occupies residues 956 to 975 (WFLSLFNVFFSSLPVIALGV). The Cytoplasmic portion of the chain corresponds to 976–1005 (FDQDVSARYCYKFPLLYQEGVQNLLFSWKR). A helical transmembrane segment spans residues 1006-1028 (IIGWMFNGVFTALAIFFLCKESL). The Extracellular portion of the chain corresponds to 1029-1041 (KHQLYNPNGKTAG). Residues 1042–1064 (REILGGTMYTCVVWVVNLQMALA) traverse the membrane as a helical segment. Topologically, residues 1065 to 1070 (ISYFTW) are cytoplasmic. A helical transmembrane segment spans residues 1071–1091 (LQHIVIWGSVAFWYIFLMIYG). At 1092–1108 (AITPSFSTDAYKVFIEA) the chain is on the extracellular side. The chain crosses the membrane as a helical span at residues 1109-1133 (LAPAPSYWLTTLFVMFFALIPFFVF). Residues 1134-1203 (KSVQMRFFPG…DQLNKNFIAF (70 aa)) lie on the Cytoplasmic side of the membrane.

It belongs to the cation transport ATPase (P-type) (TC 3.A.3) family. Type IV subfamily.

It localises to the membrane. It catalyses the reaction ATP + H2O + phospholipidSide 1 = ADP + phosphate + phospholipidSide 2.. Functionally, involved in transport of phospholipids. The polypeptide is Probable phospholipid-transporting ATPase 11 (Arabidopsis thaliana (Mouse-ear cress)).